A 240-amino-acid polypeptide reads, in one-letter code: Carboxy-S-adenosyl-L-methionine synthase (240 aa).

Residues Tyr35, 61-63 (GCS), 86-87 (DN), 112-113 (DI), and Arg194 contribute to the S-adenosyl-L-methionine site.

The protein belongs to the class I-like SAM-binding methyltransferase superfamily. Cx-SAM synthase family. Homodimer.

The enzyme catalyses prephenate + S-adenosyl-L-methionine = carboxy-S-adenosyl-L-methionine + 3-phenylpyruvate + H2O. Functionally, catalyzes the conversion of S-adenosyl-L-methionine (SAM) to carboxy-S-adenosyl-L-methionine (Cx-SAM). This is Carboxy-S-adenosyl-L-methionine synthase from Wolinella succinogenes (strain ATCC 29543 / DSM 1740 / CCUG 13145 / JCM 31913 / LMG 7466 / NCTC 11488 / FDC 602W) (Vibrio succinogenes).